A 340-amino-acid chain; its full sequence is Phosphoribosylformylglycinamidine cyclo-ligase (340 aa).

It belongs to the AIR synthase family.

Its subcellular location is the cytoplasm. The enzyme catalyses 2-formamido-N(1)-(5-O-phospho-beta-D-ribosyl)acetamidine + ATP = 5-amino-1-(5-phospho-beta-D-ribosyl)imidazole + ADP + phosphate + H(+). It functions in the pathway purine metabolism; IMP biosynthesis via de novo pathway; 5-amino-1-(5-phospho-D-ribosyl)imidazole from N(2)-formyl-N(1)-(5-phospho-D-ribosyl)glycinamide: step 2/2. The polypeptide is Phosphoribosylformylglycinamidine cyclo-ligase (Streptococcus agalactiae serotype III (strain NEM316)).